The sequence spans 157 residues: Protein Smg homolog (157 aa).

This sequence belongs to the Smg family.

This chain is Protein Smg homolog, found in Shewanella frigidimarina (strain NCIMB 400).